The chain runs to 526 residues: Cell adhesion molecule CEACAM1 (526 aa).

Residues 1 to 34 form the signal peptide; sequence MGHLSAPLHRVRVPWQGLLLTASLLTFWNPPTTA. Gln-35 carries the pyrrolidone carboxylic acid modification. The region spanning 35–142 is the Ig-like V-type domain; it reads QLTTESMPFN…EATGQFHVYP (108 aa). Topologically, residues 35 to 428 are extracellular; that stretch reads QLTTESMPFN…LPQENGLSPG (394 aa). The tract at residues 39-142 is required for homophilic binding; that stretch reads ESMPFNVAEG…EATGQFHVYP (104 aa). 20 N-linked (GlcNAc...) asparagine glycosylation sites follow: Asn-104, Asn-111, Asn-115, Asn-152, Asn-182, Asn-197, Asn-208, Asn-224, Asn-232, Asn-254, Asn-274, Asn-288, Asn-292, Asn-302, Asn-309, Asn-345, Asn-351, Asn-363, Asn-378, and Asn-405. Ig-like C2-type domains are found at residues 145-232, 237-317, and 323-413; these read PKPS…VTLN, PDTP…KTII, and PVVA…IMLN. Cys-167 and Cys-215 are disulfide-bonded. Residues Cys-259 and Cys-299 are joined by a disulfide bond. Residues Cys-348 and Cys-396 are joined by a disulfide bond. A helical membrane pass occupies residues 429–452; it reads AIAGIVIGVVALVALIAVALACFL. Positions 450–462 are interaction with calmodulin; it reads CFLHFGKTGRASD. Residues 452-526 are interaction with FLNA; it reads LHFGKTGRAS…EIIYSEVKKQ (75 aa). The Cytoplasmic portion of the chain corresponds to 453-526; it reads HFGKTGRASD…EIIYSEVKKQ (74 aa). Residues 461 to 482 are compositionally biased toward basic and acidic residues; sequence SDQRDLTEHKPSVSNHTQDHSN. The interval 461–513 is disordered; the sequence is SDQRDLTEHKPSVSNHTQDHSNDPPNKMNEVTYSTLNFEAQQPTQPTSASPSL. A compositionally biased stretch (polar residues) spans 489–513; it reads NEVTYSTLNFEAQQPTQPTSASPSL. The tract at residues 489–526 is required for interaction with PTPN11 and PTPN6 and for control of phosphorylation level; the sequence is NEVTYSTLNFEAQQPTQPTSASPSLTATEIIYSEVKKQ. At Tyr-493 the chain carries Phosphotyrosine; by SRC, LCK, INSR and EGFR. Phosphoserine is present on Ser-508. A Phosphotyrosine; by INSR, SRC and LCK modification is found at Tyr-520. The tract at residues 520-523 is essential for interaction with PTPN11 and PTPN6; sequence YSEV.

This sequence belongs to the immunoglobulin superfamily. CEA family. Monomer. Oligomer. Heterodimer. Homodimer. Cis-dimer/oligomer (via Ig-like C2-type and/or via cytoplasmic domains); induced by trans-homophilic cell adhesion through an allosteric mechanism transmitted by the Ig-like V-type domain, and is regulated by intracellular calcium and calmodulin. Interacts (via cytoplasmic domain) with calmodulin in a calcium dependent manner; reduces homophilic cell adhesion through dissociation of dimer. Isoform 1 interacts (via cytoplasmic domain) with PTPN11 (preferentially) and PTPN6; cis-homodimer form is preferred; this interaction is decreased by formation of Isoform 1 /Isoform 8 cis-heterodimers and is dependent on the monomer/dimer equilibrium; this interaction is phosphorylation-dependent. Isoform 1 interacts with LYN. Isoform 1 interacts (via cytoplasmic domain) with SRC (via SH2 domain); this interaction is regulated by trans-homophilic cell adhesion. Isoform 1 interacts (via cytoplasmic domain) with LCK; mediates phosphorylation at Tyr-493 and Tyr-520 resulting in PTPN6 association. Isoform 1 interacts with PTPN6; this interaction is phosphorylation-dependent and causes a profound decrease in TCR stimulation-induced CD247 and ZAP70 phosphorylation. Isoform 1 interacts with TCR/CD3 complex through TCR beta chain and CD3E; colocalizes at the cell surface and upon stimulation of the TCR/CD3 complex recruits PTPN6 in the TCR/CD3 complex, resulting in dephosphorylation of CD247 and ZAP70. Isoform 1 interacts (via cytoplasmic domain) with SHC1 (via SH2 domain); SHC1 mediates interaction with INSR or EGFR in a Ser-508 phosphorylation-dependent manner. Isoform 1 interacts with EGFR; the interaction is indirect. Isoform 1 interacts with CSF3R; down-regulates the CSF3R-STAT3 pathway through recruitment of PTPN6 that dephosphorylates CSF3R. Isoform 1 (phosphorylated form) interacts with TLR4 and SYK; recruits PTPN6 that dephosphorylates SYK, reducing the production of reactive oxygen species (ROS) and lysosome disruption, leading to a reduction of the inflammasome activity. Isoform 1 interacts with FLNA; inhibits cell migration and cell scattering by interfering with the interaction of FLNA with RALA. Isoform 1 interacts (via cytoplasmic domain) with PXN; the interaction is phosphotyrosyl-dependent. Isoform 1 interacts with KLRK1; recruits PTPN6 that dephosphorylates VAV1. Isoform 1 interacts with CEACAM8. Isoform 1 interacts with FASN; this interaction is insulin and phosphorylation-dependent; reduces fatty-acid synthase activity. Interacts (via Ig-like V-type) with HAVCR2 (via Ig-like V-type); facilitates the maturation and cell surface expression of HAVCR2 thereby regulating T cell tolerance induction. Isoform 8 interacts (via the cytoplasmic domain) with ANXA2; this interaction is regulated by phosphorylation and appears in the AIIt complex. Interacts (via Lewis X moieties) with CD209 (via C-type lectin domain); this interaction is regulated by the glycosylation pattern of CEACAM1 on cell types and regulates contact between dendritic cells and neutrophils. Phosphorylated on serine and tyrosine. Isoform 1 is phosphorylated on tyrosine by Src family kinases like SRC and LCK and by receptor like CSF3R, EGFR and INSR upon stimulation. Phosphorylated at Ser-508; mediates activity. Phosphorylated at Tyr-493; regulates activity. Phosphorylated at Tyr-493 by EGFR and INSR upon stimulation; this phosphorylation is Ser-508-phosphorylation-dependent; mediates cellular internalization; increases interaction with downstream proteins like SHC1 and FASN. Phosphorylated at Tyr-493 and Tyr-520 by LCK; mediates PTPN6 association and is regulated by homophilic ligation of CEACAM1 in the absence of T cell activation. Phosphorylated at Tyr-520; mediates interaction with PTPN11. Post-translationally, phosphorylated on serine and threonine. Expressed in columnar epithelial cells of the colon (at protein level). The predominant forms expressed by T cells are those containing a long cytoplasmic domain. Expressed in granulocytes and lymphocytes. Leukocytes only express isoforms 6 and isoform 1.

It localises to the cell membrane. It is found in the lateral cell membrane. The protein resides in the apical cell membrane. The protein localises to the basal cell membrane. Its subcellular location is the cell junction. It localises to the adherens junction. It is found in the secreted. The protein resides in the cytoplasmic vesicle. The protein localises to the secretory vesicle membrane. Its subcellular location is the cell projection. It localises to the microvillus membrane. In terms of biological role, cell adhesion protein that mediates homophilic cell adhesion in a calcium-independent manner. Plays a role as coinhibitory receptor in immune response, insulin action and also functions as an activator during angiogenesis. Its coinhibitory receptor function is phosphorylation- and PTPN6 -dependent, which in turn, suppress signal transduction of associated receptors by dephosphorylation of their downstream effectors. Plays a role in immune response, of T cells, natural killer (NK) and neutrophils. Upon TCR/CD3 complex stimulation, inhibits TCR-mediated cytotoxicity by blocking granule exocytosis by mediating homophilic binding to adjacent cells, allowing interaction with and phosphorylation by LCK and interaction with the TCR/CD3 complex which recruits PTPN6 resulting in dephosphorylation of CD247 and ZAP70. Also inhibits T cell proliferation and cytokine production through inhibition of JNK cascade and plays a crucial role in regulating autoimmunity and anti-tumor immunity by inhibiting T cell through its interaction with HAVCR2. Upon natural killer (NK) cells activation, inhibit KLRK1-mediated cytolysis of CEACAM1-bearing tumor cells by trans-homophilic interactions with CEACAM1 on the target cell and lead to cis-interaction between CEACAM1 and KLRK1, allowing PTPN6 recruitment and then VAV1 dephosphorylation. Upon neutrophils activation negatively regulates IL1B production by recruiting PTPN6 to a SYK-TLR4-CEACAM1 complex, that dephosphorylates SYK, reducing the production of reactive oxygen species (ROS) and lysosome disruption, which in turn, reduces the activity of the inflammasome. Down-regulates neutrophil production by acting as a coinhibitory receptor for CSF3R by down-regulating the CSF3R-STAT3 pathway through recruitment of PTPN6 that dephosphorylates CSF3R. Also regulates insulin action by promoting INS clearance and regulating lipogenesis in liver through regulating insulin signaling. Upon INS stimulation, undergoes phosphorylation by INSR leading to INS clearance by increasing receptor-mediated insulin endocytosis. This inernalization promotes interaction with FASN leading to receptor-mediated insulin degradation and to reduction of FASN activity leading to negative regulation of fatty acid synthesis. INSR-mediated phosphorylation also provokes a down-regulation of cell proliferation through SHC1 interaction resulting in decrease coupling of SHC1 to the MAPK3/ERK1-MAPK1/ERK2 and phosphatidylinositol 3-kinase pathways. Functions as activator in angiogenesis by promoting blood vessel remodeling through endothelial cell differentiation and migration and in arteriogenesis by increasing the number of collateral arteries and collateral vessel calibers after ischemia. Also regulates vascular permeability through the VEGFR2 signaling pathway resulting in control of nitric oxide production. Down-regulates cell growth in response to EGF through its interaction with SHC1 that mediates interaction with EGFR resulting in decrease coupling of SHC1 to the MAPK3/ERK1-MAPK1/ERK2 pathway. Negatively regulates platelet aggregation by decreasing platelet adhesion on type I collagen through the GPVI-FcRgamma complex. Inhibits cell migration and cell scattering through interaction with FLNA; interferes with the interaction of FLNA with RALA. Mediates bile acid transport activity in a phosphorylation dependent manner. Negatively regulates osteoclastogenesis. Its function is as follows. Cell adhesion protein that mediates homophilic cell adhesion in a calcium-independent manner. Promotes populations of T cells regulating IgA production and secretion associated with control of the commensal microbiota and resistance to enteropathogens. This is Cell adhesion molecule CEACAM1 from Homo sapiens (Human).